Consider the following 160-residue polypeptide: Transcription elongation factor GreA (160 aa).

A coiled-coil region spans residues 12–76 (EGVKKLEEEL…QLENMLKNAS (65 aa)).

The protein belongs to the GreA/GreB family.

Its function is as follows. Necessary for efficient RNA polymerase transcription elongation past template-encoded arresting sites. The arresting sites in DNA have the property of trapping a certain fraction of elongating RNA polymerases that pass through, resulting in locked ternary complexes. Cleavage of the nascent transcript by cleavage factors such as GreA or GreB allows the resumption of elongation from the new 3'terminus. GreA releases sequences of 2 to 3 nucleotides. This chain is Transcription elongation factor GreA, found in Clostridium botulinum (strain Kyoto / Type A2).